The primary structure comprises 126 residues: Methylglyoxal synthase (126 aa).

In terms of domain architecture, MGS-like spans 1 to 126 (MAGSKCLALI…AIKLLPTLEA (126 aa)). Residues histidine 12, lysine 16, 38–41 (TGTT), and 59–60 (SG) contribute to the substrate site. Residue aspartate 65 is the Proton donor/acceptor of the active site. Histidine 92 contacts substrate.

This sequence belongs to the methylglyoxal synthase family.

It catalyses the reaction dihydroxyacetone phosphate = methylglyoxal + phosphate. Catalyzes the formation of methylglyoxal from dihydroxyacetone phosphate. The sequence is that of Methylglyoxal synthase from Rhizobium etli (strain ATCC 51251 / DSM 11541 / JCM 21823 / NBRC 15573 / CFN 42).